The sequence spans 240 residues: Transcription factor bHLH101 (240 aa).

Residues 65-117 (EKKLNHNASERDRRRKLNALYSSLRALLPLSDQKRKLSIPMTVARVVKYIPEQ) enclose the bHLH domain.

In terms of assembly, homodimer. Flowers.

The protein resides in the nucleus. This is Transcription factor bHLH101 (BHLH101) from Arabidopsis thaliana (Mouse-ear cress).